Here is a 367-residue protein sequence, read N- to C-terminus: Protein-glutamate methylesterase/protein-glutamine glutaminase (367 aa).

One can recognise a Response regulatory domain in the interval 6 to 123; it reads RVLVVDDSAF…SLGIKQLADE (118 aa). D57 bears the 4-aspartylphosphate mark. Residues 165–361 form the CheB-type methylesterase domain; that stretch reads ISKKEIVVVI…DILLKKVNEY (197 aa). Active-site residues include S177, H204, and D303.

Belongs to the CheB family. In terms of processing, phosphorylated by CheA. Phosphorylation of the N-terminal regulatory domain activates the methylesterase activity.

Its subcellular location is the cytoplasm. The catalysed reaction is [protein]-L-glutamate 5-O-methyl ester + H2O = L-glutamyl-[protein] + methanol + H(+). It carries out the reaction L-glutaminyl-[protein] + H2O = L-glutamyl-[protein] + NH4(+). Its function is as follows. Involved in chemotaxis. Part of a chemotaxis signal transduction system that modulates chemotaxis in response to various stimuli. Catalyzes the demethylation of specific methylglutamate residues introduced into the chemoreceptors (methyl-accepting chemotaxis proteins or MCP) by CheR. Also mediates the irreversible deamidation of specific glutamine residues to glutamic acid. This is Protein-glutamate methylesterase/protein-glutamine glutaminase from Caldanaerobacter subterraneus subsp. tengcongensis (strain DSM 15242 / JCM 11007 / NBRC 100824 / MB4) (Thermoanaerobacter tengcongensis).